A 210-amino-acid chain; its full sequence is Putative truncated L-serine dehydratase SDL1 (210 aa).

Belongs to the serine/threonine dehydratase family. Pyridoxal 5'-phosphate is required as a cofactor.

It is found in the cytoplasm. The catalysed reaction is L-serine = pyruvate + NH4(+). It participates in carbohydrate biosynthesis; gluconeogenesis. The protein is Putative truncated L-serine dehydratase SDL1 (SDL1) of Saccharomyces cerevisiae (strain ATCC 204508 / S288c) (Baker's yeast).